The primary structure comprises 370 residues: S-adenosylmethionine decarboxylase proenzyme (370 aa).

Position 28 (Phe-28) interacts with substrate. Active-site residues include Glu-29 and Glu-32. Glu-85 contributes to the substrate binding site. The active-site Schiff-base intermediate with substrate; via pyruvic acid is Ser-86. Ser-86 carries the pyruvic acid (Ser); by autocatalysis modification. The Proton donor; for catalytic activity role is filled by Cys-100. Catalysis depends on proton acceptor; for processing activity residues Ser-249 and His-262. A substrate-binding site is contributed by Glu-266.

Belongs to the eukaryotic AdoMetDC family. As to quaternary structure, forms a heterodimer with catalytically inactive AdoMetDC prozyme; heterodimerization is required to activate AdoMetDC. Requires pyruvate as cofactor. Is synthesized initially as an inactive proenzyme. Formation of the active enzyme involves a self-maturation process in which the active site pyruvoyl group is generated from an internal serine residue via an autocatalytic post-translational modification. Two non-identical subunits are generated from the proenzyme in this reaction, and the pyruvate is formed at the N-terminus of the alpha chain, which is derived from the carboxyl end of the proenzyme. The post-translation cleavage follows an unusual pathway, termed non-hydrolytic serinolysis, in which the side chain hydroxyl group of the serine supplies its oxygen atom to form the C-terminus of the beta chain, while the remainder of the serine residue undergoes an oxidative deamination to produce ammonia and the pyruvoyl group blocking the N-terminus of the alpha chain.

It carries out the reaction S-adenosyl-L-methionine + H(+) = S-adenosyl 3-(methylsulfanyl)propylamine + CO2. Its pathway is amine and polyamine biosynthesis; S-adenosylmethioninamine biosynthesis; S-adenosylmethioninamine from S-adenosyl-L-methionine: step 1/1. With respect to regulation, allosterically activated by AdoMetDC prozyme. Activated by putrescine and to a lesser extent by spermidine, norspermidine and spermine. Inhibited by 5'-([(Z)-4-amino-2-butenyl]methylamino)-5'-deoxyadenosine (MDL 73811). Functionally, in association with the catalytically inactive AdoMetDC prozyme, catalyzes the decarboxylation of S-adenosyl-L-methionine which is essential for the biosynthesis of the polyamine spermidine. Required for growth and survival during the bloodstream life cycle stage. The chain is S-adenosylmethionine decarboxylase proenzyme from Trypanosoma brucei brucei.